The following is a 386-amino-acid chain: S-adenosylmethionine synthase (386 aa).

Histidine 16 contacts ATP. Aspartate 18 contacts Mg(2+). A K(+)-binding site is contributed by glutamate 44. Residues glutamate 57 and glutamine 100 each contribute to the L-methionine site. The interval 100–110 is flexible loop; that stretch reads QSRDIAQGVDR. ATP is bound by residues 165 to 167, aspartate 240, 246 to 247, alanine 263, and lysine 267; these read DAK and RK. Residue aspartate 240 coordinates L-methionine. L-methionine is bound at residue lysine 271.

The protein belongs to the AdoMet synthase family. As to quaternary structure, homotetramer; dimer of dimers. Mg(2+) serves as cofactor. K(+) is required as a cofactor.

The protein resides in the cytoplasm. The enzyme catalyses L-methionine + ATP + H2O = S-adenosyl-L-methionine + phosphate + diphosphate. It functions in the pathway amino-acid biosynthesis; S-adenosyl-L-methionine biosynthesis; S-adenosyl-L-methionine from L-methionine: step 1/1. Functionally, catalyzes the formation of S-adenosylmethionine (AdoMet) from methionine and ATP. The overall synthetic reaction is composed of two sequential steps, AdoMet formation and the subsequent tripolyphosphate hydrolysis which occurs prior to release of AdoMet from the enzyme. The sequence is that of S-adenosylmethionine synthase from Francisella tularensis subsp. holarctica (strain FTNF002-00 / FTA).